We begin with the raw amino-acid sequence, 166 residues long: Coiled-coil domain-containing protein 12 (166 aa).

M1 is subject to N-acetylmethionine. A coiled-coil region spans residues V8–K28. The segment covering R21–K53 has biased composition (basic and acidic residues). The segment at R21–R55 is disordered. K53 carries the post-translational modification N6-acetyllysine. K94 is covalently cross-linked (Glycyl lysine isopeptide (Lys-Gly) (interchain with G-Cter in SUMO2)). Positions D115–K144 form a coiled coil. Residues Q146–D166 form a disordered region. Residues S149 and S165 each carry the phosphoserine modification.

The polypeptide is Coiled-coil domain-containing protein 12 (Ccdc12) (Mus musculus (Mouse)).